We begin with the raw amino-acid sequence, 377 residues long: Chaperone protein DnaJ (377 aa).

The J domain occupies 5 to 69 (EYYDRLGVSK…QKRAAYDQYG (65 aa)). The CR-type zinc finger occupies 133 to 215 (GTEKEVHYNR…CHGTGHEKQS (83 aa)). 8 residues coordinate Zn(2+): Cys-146, Cys-149, Cys-163, Cys-166, Cys-189, Cys-192, Cys-203, and Cys-206. CXXCXGXG motif repeat units lie at residues 146 to 153 (CHTCNGSG), 163 to 170 (CSKCHGSG), 189 to 196 (CDVCHGTG), and 203 to 210 (CPTCHGTG).

Belongs to the DnaJ family. In terms of assembly, homodimer. The cofactor is Zn(2+).

It is found in the cytoplasm. Functionally, participates actively in the response to hyperosmotic and heat shock by preventing the aggregation of stress-denatured proteins and by disaggregating proteins, also in an autonomous, DnaK-independent fashion. Unfolded proteins bind initially to DnaJ; upon interaction with the DnaJ-bound protein, DnaK hydrolyzes its bound ATP, resulting in the formation of a stable complex. GrpE releases ADP from DnaK; ATP binding to DnaK triggers the release of the substrate protein, thus completing the reaction cycle. Several rounds of ATP-dependent interactions between DnaJ, DnaK and GrpE are required for fully efficient folding. Also involved, together with DnaK and GrpE, in the DNA replication of plasmids through activation of initiation proteins. This chain is Chaperone protein DnaJ, found in Streptococcus mutans serotype c (strain ATCC 700610 / UA159).